A 583-amino-acid polypeptide reads, in one-letter code: Sensor protein SrrB (583 aa).

The Cytoplasmic portion of the chain corresponds to 1–11; the sequence is MMSRLNSVVIK. The helical transmembrane segment at 12 to 32 threads the bilayer; sequence LWLTIILIVTTVLILLSIALI. Topologically, residues 33 to 174 are extracellular; that stretch reads TFMQYYFTQE…SIEDTNNAIT (142 aa). Residues 175-195 form a helical membrane-spanning segment; it reads IITIITAVIFLTITTVFAFFL. Residues 196–583 are Cytoplasmic-facing; it reads SSRITKPLRR…TFIIKLPKPE (388 aa). The HAMP domain occupies 197–249; the sequence is SRITKPLRRLRDQATRVSEGDYSYKPSVTTKDEIGQLSQAFNQMSTEIEEHVD. Positions 366–583 constitute a Histidine kinase domain; the sequence is NVSHELRTPI…TFIIKLPKPE (218 aa). A Phosphohistidine; by autocatalysis modification is found at H369.

Its subcellular location is the cell membrane. The catalysed reaction is ATP + protein L-histidine = ADP + protein N-phospho-L-histidine.. In terms of biological role, member of the two-component regulatory system SrrA/SrrB, which is involved in the global regulation of staphylococcal virulence factors in response to environmental oxygen levels as well as biofilm formation. Also plays an essential role in host-derived nitric oxide resistance by regulating hmp/flavohemoglobin, an enzyme that detoxifies nitric oxide by converting it to nitrate. Functions as a sensor protein kinase which is autophosphorylated at a histidine residue and transfers its phosphate group to SrrA. In turn, SrrA binds to the upstream promoter regions of the target genes to positively and negatively regulate their expression. In Staphylococcus aureus, this protein is Sensor protein SrrB (srrB).